We begin with the raw amino-acid sequence, 612 residues long: Elongation factor 4 (612 aa).

One can recognise a tr-type G domain in the interval 11–193 (KHIRNFSIIA…KLVTDVPAPT (183 aa)). GTP is bound by residues 23 to 28 (DHGKST) and 140 to 143 (NKID).

It belongs to the TRAFAC class translation factor GTPase superfamily. Classic translation factor GTPase family. LepA subfamily.

The protein resides in the cell membrane. It catalyses the reaction GTP + H2O = GDP + phosphate + H(+). In terms of biological role, required for accurate and efficient protein synthesis under certain stress conditions. May act as a fidelity factor of the translation reaction, by catalyzing a one-codon backward translocation of tRNAs on improperly translocated ribosomes. Back-translocation proceeds from a post-translocation (POST) complex to a pre-translocation (PRE) complex, thus giving elongation factor G a second chance to translocate the tRNAs correctly. Binds to ribosomes in a GTP-dependent manner. In Latilactobacillus sakei subsp. sakei (strain 23K) (Lactobacillus sakei subsp. sakei), this protein is Elongation factor 4.